A 492-amino-acid chain; its full sequence is GTPase Der (492 aa).

EngA-type G domains are found at residues Phe3–Ala167 and Leu201–Asn381. Residues Gly9 to Ser16, Asp56 to Leu60, Asn119 to Glu122, Gly207 to Ser214, Asp259 to Met263, and Asn324 to Asp327 contribute to the GTP site. The region spanning Arg382–Ala468 is the KH-like domain. Positions Met462–Asp492 are disordered. Residues Lys472–Asp492 show a composition bias toward basic residues.

This sequence belongs to the TRAFAC class TrmE-Era-EngA-EngB-Septin-like GTPase superfamily. EngA (Der) GTPase family. In terms of assembly, associates with the 50S ribosomal subunit.

Functionally, GTPase that plays an essential role in the late steps of ribosome biogenesis. This Roseobacter denitrificans (strain ATCC 33942 / OCh 114) (Erythrobacter sp. (strain OCh 114)) protein is GTPase Der.